The following is a 481-amino-acid chain: Ammonium transporter 2 member 3 (481 aa).

Topologically, residues 1–36 (MNFNSSKYISHLPESLLPNDASPEWNNKADNAWQLT) are extracellular. A glycan (N-linked (GlcNAc...) asparagine) is linked at Asn-4. A helical transmembrane segment spans residues 37–57 (AATLVGLQTVPGLVILYGSMV). The Cytoplasmic portion of the chain corresponds to 58–62 (KKKWA). Residues 63-83 (VNSAFMALYAFAAVLVCWVLW) traverse the membrane as a helical segment. At 84 to 123 (AHHMAFGTKLLPFVGKPNFALSQKFLLSKASTNYYLPMAD) the chain is on the extracellular side. Residues 124–144 (FVFYQFAFAAITLVLLGGSLL) traverse the membrane as a helical segment. Residues 145–151 (GRMNFYA) are Cytoplasmic-facing. A helical membrane pass occupies residues 152–172 (WMLFVPLWLTLSYTVGAFTIW). Residues 173–184 (GNGFLEGKIIDY) lie on the Extracellular side of the membrane. A helical membrane pass occupies residues 185 to 205 (AGGFVIHLSSGVAGFTAAYWV). Residues 206-220 (GPRTSNDRQNFPPNN) are Cytoplasmic-facing. The helical transmembrane segment at 221–241 (IIHMLGGAGFLWMGWTGFNGG) threads the bilayer. Topologically, residues 242-248 (APFQVGE) are extracellular. The chain crosses the membrane as a helical span at residues 249–269 (ITSLAIFNTHLCTATSILVWI). Topologically, residues 270–281 (SLDMAVYKKGSL) are cytoplasmic. The helical transmembrane segment at 282–302 (IGSVQGMMTGLVCITPGAGLV) threads the bilayer. At 303 to 304 (DP) the chain is on the extracellular side. The helical transmembrane segment at 305–325 (WAAILMGALSGSIPWYTMMVL) threads the bilayer. Residues 326-338 (HKKSPFFQSVDDT) are Cytoplasmic-facing. The chain crosses the membrane as a helical span at residues 339–359 (LGVFHTHAVAGILGGILSGVF). The Extracellular segment spans residues 360–363 (AKPK). A helical transmembrane segment spans residues 364-381 (LLRILYGPYGSGLLYSYF). The Cytoplasmic segment spans residues 382–395 (DDNIGQGIKQMWYQ). Residues 396 to 416 (LLGAVFITIWNVVITSLICIL) form a helical membrane-spanning segment. The Extracellular segment spans residues 417-481 (LNRFVNLRMQ…HSFPINKIDE (65 aa)).

This sequence belongs to the ammonia transporter channel (TC 1.A.11.2) family. Mostly expressed in mycorrhizal roots. Also observed in the cortex and endodermis of non-mycorrhizal roots.

It localises to the cell membrane. Functionally, involved in ammonium transport. Required for arbuscular mycorrhizal (AM) symbiosis with AM fungi (e.g. Glomus versiforme and G.intraradices) in low nitrogen conditions. This chain is Ammonium transporter 2 member 3, found in Medicago truncatula (Barrel medic).